Here is a 136-residue protein sequence, read N- to C-terminus: MANSLCFFSSPPTFCFQSPSKNPKPSHFFSTNDNTSSLVQKRELLQTSRSQSFEVKAANNNPQGTKPNSLVCANCEGEGCVACSQCKGGGVNLIDHFNGQFKAGALCWLCRGKKEVLCGDCNGAGFIGGFLSTFDE.

The transit peptide at 1-56 directs the protein to the chloroplast; that stretch reads MANSLCFFSSPPTFCFQSPSKNPKPSHFFSTNDNTSSLVQKRELLQTSRSQSFEVK. The CR-type zinc-finger motif lies at 62 to 133; sequence PQGTKPNSLV…AGFIGGFLST (72 aa). Residues Cys-72, Cys-75, Glu-78, Cys-80, Cys-83, Cys-86, Cys-107, Cys-110, Glu-115, Cys-118, and Cys-121 each contribute to the Zn(2+) site.

The protein belongs to the BSD2 chaperone family. As to quaternary structure, interacts with the RuBisCo large subunit (RbcL) assembled as an intermediate complex made of eight RbcL and eight BSD2 subunits.

It is found in the plastid. Its subcellular location is the chloroplast stroma. Its function is as follows. Chloroplast chaperone required for RuBisCo biogenesis and translational regulation of the RuBisCo large subunit (RbcL). Stabilizes an end-state assembly intermediate of eight RbcL subunits until the small subunits (RBCSs) become available to produce a complete stable RuBisCo complex containing eight small and eight large subunits. The chain is Protein BUNDLE SHEATH DEFECTIVE 2, chloroplastic from Arabidopsis thaliana (Mouse-ear cress).